A 157-amino-acid polypeptide reads, in one-letter code: Electron transfer flavoprotein regulatory factor 1 homolog (157 aa).

This sequence belongs to the complex I LYR family.

Its subcellular location is the mitochondrion. This chain is Electron transfer flavoprotein regulatory factor 1 homolog, found in Dictyostelium discoideum (Social amoeba).